The chain runs to 408 residues: Solute carrier family 35 member F1 (408 aa).

The segment at 1-21 is disordered; the sequence is MIPPEQPQQQLQPPSPAPPNH. 10 consecutive transmembrane segments (helical) span residues 60–80, 94–114, 129–147, 158–178, 186–206, 221–241, 247–267, 284–304, 311–331, and 335–355; these read MLISVALGQVLSLLICGIGLT, VFQSFLNYILLFLVYTTTLAV, WWKYMILGLIDLEANYLVV, IQLLDCFVIPVVILLSWFFLL, FIGIVVCILGMGCMVGADVLV, LLVLGGATLYGISNVWEEYII, VEFLGMIGLFGAFFSGIQLAI, LLYVGFSACMFGLYSFMPVVI, SVNLSLLTADLYSLFCGLFLF, and FSGLYLLSFFTILIGLVLYSS.

Belongs to the SLC35F solute transporter family.

Its subcellular location is the cytoplasmic vesicle. The protein localises to the secretory vesicle. It localises to the synaptic vesicle membrane. Its function is as follows. Putative solute transporter. This Homo sapiens (Human) protein is Solute carrier family 35 member F1 (SLC35F1).